Here is a 303-residue protein sequence, read N- to C-terminus: Mycothiol acetyltransferase (303 aa).

N-acetyltransferase domains lie at 1–150 and 162–303; these read MALL…RPLD and VTIR…QFGR. E18 is a binding site for 1D-myo-inositol 2-(L-cysteinylamino)-2-deoxy-alpha-D-glucopyranoside. 77–79 is an acetyl-CoA binding site; sequence LAV. Residues E189, K229, and E237 each contribute to the 1D-myo-inositol 2-(L-cysteinylamino)-2-deoxy-alpha-D-glucopyranoside site. Acetyl-CoA contacts are provided by residues 241–243 and 248–254; these read VGV and QGNGLGR. Y275 is a binding site for 1D-myo-inositol 2-(L-cysteinylamino)-2-deoxy-alpha-D-glucopyranoside. Position 280–285 (280–285) interacts with acetyl-CoA; sequence NTAAIK.

The protein belongs to the acetyltransferase family. MshD subfamily. As to quaternary structure, monomer.

It catalyses the reaction 1D-myo-inositol 2-(L-cysteinylamino)-2-deoxy-alpha-D-glucopyranoside + acetyl-CoA = mycothiol + CoA + H(+). Its function is as follows. Catalyzes the transfer of acetyl from acetyl-CoA to desacetylmycothiol (Cys-GlcN-Ins) to form mycothiol. This chain is Mycothiol acetyltransferase, found in Saccharopolyspora erythraea (strain ATCC 11635 / DSM 40517 / JCM 4748 / NBRC 13426 / NCIMB 8594 / NRRL 2338).